The primary structure comprises 190 residues: Peptidyl-tRNA hydrolase (190 aa).

Tyr-14 contributes to the tRNA binding site. Residue His-19 is the Proton acceptor of the active site. The tRNA site is built by Tyr-64, Asn-66, and Asn-112.

This sequence belongs to the PTH family. Monomer.

It is found in the cytoplasm. The enzyme catalyses an N-acyl-L-alpha-aminoacyl-tRNA + H2O = an N-acyl-L-amino acid + a tRNA + H(+). In terms of biological role, hydrolyzes ribosome-free peptidyl-tRNAs (with 1 or more amino acids incorporated), which drop off the ribosome during protein synthesis, or as a result of ribosome stalling. Functionally, catalyzes the release of premature peptidyl moieties from peptidyl-tRNA molecules trapped in stalled 50S ribosomal subunits, and thus maintains levels of free tRNAs and 50S ribosomes. This Chlorobium phaeovibrioides (strain DSM 265 / 1930) (Prosthecochloris vibrioformis (strain DSM 265)) protein is Peptidyl-tRNA hydrolase.